A 419-amino-acid polypeptide reads, in one-letter code: Phosphoribosylamine--glycine ligase (419 aa).

One can recognise an ATP-grasp domain in the interval 109–311 (KQLLIEAGVP…LEKVLMACVE (203 aa)). 135–191 (ATKMGAPIVVKADGLAAGKGVIVAQTSAEATTAIAELFDQGFEKIVVEEFLPGEEVS) contacts ATP. Mg(2+) is bound by residues Glu281 and Asn283.

The protein belongs to the GARS family. Requires Mg(2+) as cofactor. The cofactor is Mn(2+).

It carries out the reaction 5-phospho-beta-D-ribosylamine + glycine + ATP = N(1)-(5-phospho-beta-D-ribosyl)glycinamide + ADP + phosphate + H(+). Its pathway is purine metabolism; IMP biosynthesis via de novo pathway; N(1)-(5-phospho-D-ribosyl)glycinamide from 5-phospho-alpha-D-ribose 1-diphosphate: step 2/2. In Synechocystis sp. (strain ATCC 27184 / PCC 6803 / Kazusa), this protein is Phosphoribosylamine--glycine ligase.